A 485-amino-acid polypeptide reads, in one-letter code: Glutamyl-tRNA(Gln) amidotransferase subunit A (485 aa).

Residues lysine 79 and serine 154 each act as charge relay system in the active site. Catalysis depends on serine 178, which acts as the Acyl-ester intermediate.

This sequence belongs to the amidase family. GatA subfamily. As to quaternary structure, heterotrimer of A, B and C subunits.

It catalyses the reaction L-glutamyl-tRNA(Gln) + L-glutamine + ATP + H2O = L-glutaminyl-tRNA(Gln) + L-glutamate + ADP + phosphate + H(+). Functionally, allows the formation of correctly charged Gln-tRNA(Gln) through the transamidation of misacylated Glu-tRNA(Gln) in organisms which lack glutaminyl-tRNA synthetase. The reaction takes place in the presence of glutamine and ATP through an activated gamma-phospho-Glu-tRNA(Gln). The polypeptide is Glutamyl-tRNA(Gln) amidotransferase subunit A (Sulfurihydrogenibium sp. (strain YO3AOP1)).